Reading from the N-terminus, the 610-residue chain is Phosphoenolpyruvate carboxykinase [GTP] (610 aa).

Substrate is bound by residues arginine 82 and tyrosine 221–glycine 223. Residues lysine 230 and histidine 250 each contribute to the Mn(2+) site. Position 272 (serine 272) interacts with substrate. Alanine 273–asparagine 278 serves as a coordination point for GTP. Residue cysteine 274 is part of the active site. Aspartate 297 is a binding site for Mn(2+). Residue asparagine 387 to arginine 389 participates in substrate binding. GTP is bound by residues arginine 389, arginine 420, and phenylalanine 515–asparagine 518.

Belongs to the phosphoenolpyruvate carboxykinase [GTP] family. As to quaternary structure, monomer. The cofactor is Mn(2+).

It is found in the cytoplasm. It catalyses the reaction oxaloacetate + GTP = phosphoenolpyruvate + GDP + CO2. It participates in carbohydrate biosynthesis; gluconeogenesis. In terms of biological role, catalyzes the conversion of oxaloacetate (OAA) to phosphoenolpyruvate (PEP), the rate-limiting step in the metabolic pathway that produces glucose from lactate and other precursors derived from the citric acid cycle. This is Phosphoenolpyruvate carboxykinase [GTP] from Corynebacterium glutamicum (strain R).